We begin with the raw amino-acid sequence, 581 residues long: Arginine--tRNA ligase (581 aa).

The short motif at 126-136 (PNLAKEMHVGH) is the 'HIGH' region element.

This sequence belongs to the class-I aminoacyl-tRNA synthetase family. Monomer.

The protein localises to the cytoplasm. It catalyses the reaction tRNA(Arg) + L-arginine + ATP = L-arginyl-tRNA(Arg) + AMP + diphosphate. The sequence is that of Arginine--tRNA ligase from Shewanella denitrificans (strain OS217 / ATCC BAA-1090 / DSM 15013).